The chain runs to 475 residues: MATASQGKVTQVIGAVVDVQFDGGLPAILNALETVNNDKRLVLEVAQHLGENTVRTIAMDATEGLVRGAPVTDLGGPISVPVGDATLGRILNVIGEPIDEKGPVSGDSTRAIHQPAPTFAEQSTTSEILVTGIKVIDLLAPYSKGGKIGLFGGAGVGKTVLIMELINNIAKVHSGYSVFAGVGERTREGNDLYHEMIDSGVIKIDNLSESKVALVYGQMNEPPGARARVALTGLTLAEQFRDQSGTDVLFFVDNIFRFTQAGSEVSALLGRIPSAVGYQPTLATDMGALQERITSTKAGSITSVQAIYVPADDLTDPAPATSFAHLDATTVLSRAISELGIYPAVDPLDSTSRILDPQIVGEEHYNVARAVQGILQRYKSLQDIIAILGMDELSEEDKLTVARARKIQRFLSQPFDVAKVFTGSDGVQVPLEKTIASFKAVVNGEYDHLPEAAFYMVGDIEDVIAKAQRLAAQAA.

Residue Gly-152 to Thr-159 coordinates ATP.

This sequence belongs to the ATPase alpha/beta chains family. F-type ATPases have 2 components, CF(1) - the catalytic core - and CF(0) - the membrane proton channel. CF(1) has five subunits: alpha(3), beta(3), gamma(1), delta(1), epsilon(1). CF(0) has four main subunits: a(1), b(1), b'(1) and c(9-12).

It is found in the cell inner membrane. The enzyme catalyses ATP + H2O + 4 H(+)(in) = ADP + phosphate + 5 H(+)(out). Produces ATP from ADP in the presence of a proton gradient across the membrane. The catalytic sites are hosted primarily by the beta subunits. The polypeptide is ATP synthase subunit beta (Cereibacter sphaeroides (strain ATCC 17025 / ATH 2.4.3) (Rhodobacter sphaeroides)).